Consider the following 138-residue polypeptide: Histone H2B.3 (138 aa).

2 stretches are compositionally biased toward basic and acidic residues: residues 1-18 (MAPK…EKTT) and 26-38 (EKRP…GGDK). A disordered region spans residues 1-46 (MAPKAEKKPVAEKAEKTTAAKKTKAEKRPPASKEGGDKKGKKKSKK). 2 positions are modified to N6-acetyllysine: Lys-7 and Lys-27. A Glycyl lysine isopeptide (Lys-Gly) (interchain with G-Cter in ubiquitin) cross-link involves residue Lys-134.

Belongs to the histone H2B family. The nucleosome is a histone octamer containing two molecules each of H2A, H2B, H3 and H4 assembled in one H3-H4 heterotetramer and two H2A-H2B heterodimers. The octamer wraps approximately 147 bp of DNA. Post-translationally, can be acetylated to form H2BK6ac and H2BK33ac. Monoubiquitinated to form H2BK143ub1; may give a specific tag for epigenetic transcriptional activation.

Its subcellular location is the nucleus. It is found in the chromosome. Core component of nucleosome. Nucleosomes wrap and compact DNA into chromatin, limiting DNA accessibility to the cellular machineries which require DNA as a template. Histones thereby play a central role in transcription regulation, DNA repair, DNA replication and chromosomal stability. DNA accessibility is regulated via a complex set of post-translational modifications of histones, also called histone code, and nucleosome remodeling. The chain is Histone H2B.3 from Triticum aestivum (Wheat).